A 147-amino-acid polypeptide reads, in one-letter code: Hemoglobin subunit delta (147 aa).

The region spanning 3-147 is the Globin domain; the sequence is HLTPEEKAAV…VATALAHKYH (145 aa). The heme b site is built by histidine 64 and histidine 93.

Belongs to the globin family. In terms of assembly, heterotetramer of two delta chains and two alpha chains. In terms of tissue distribution, red blood cells.

This chain is Hemoglobin subunit delta (HBD), found in Ateles geoffroyi (Black-handed spider monkey).